The following is a 337-amino-acid chain: m7GpppX diphosphatase (337 aa).

Residues 1–37 form a disordered region; the sequence is MADTAPQPSKRKRERDPEEAEAPSTEEKEARVGNGTS. Ala2 carries the N-acetylalanine modification. Residues 10–13 carry the nuclear localization signal (NLS) motif; sequence KRKR. Ser24 and Ser101 each carry phosphoserine. N6-acetyllysine is present on residues Lys138 and Lys142. The nuclear export sequence (NES) motif lies at 142–154; it reads KYLHQDLHLVRET. Residues Trp175, Glu185, Asp205, Lys207, and 268 to 279 each bind substrate; that span reads HYLPSYYHLHVH. The Histidine triad motif signature appears at 275–279; the sequence is HLHVH. The active-site Nucleophile is His277.

It belongs to the HIT family. In terms of assembly, homodimer. Associates with components of the exosome multienzyme ribonuclease complex, such as EXOSC3 and EXOSC4. Interacts with NDOR1.

It is found in the cytoplasm. The protein localises to the nucleus. The catalysed reaction is a 5'-end (N(7)-methyl 5'-triphosphoguanosine)-ribonucleoside in mRNA + H2O = N(7)-methyl-GMP + a 5'-end diphospho-ribonucleoside in mRNA + 2 H(+). With respect to regulation, the hydrolytic product 7-methylguanosine diphosphate (m7GDP) efficiently inhibits the decapping scavenger activity and acts as a competitive inhibitor in vitro. Inhibited by 2,4-diaminoquinazoline. In terms of biological role, decapping scavenger enzyme that catalyzes the cleavage of a residual cap structure following the degradation of mRNAs by the 3'-&gt;5' exosome-mediated mRNA decay pathway. Hydrolyzes cap analog structures like 7-methylguanosine nucleoside triphosphate (m7GpppG) with up to 10 nucleotide substrates (small capped oligoribonucleotides) and specifically releases 5'-phosphorylated RNA fragments and 7-methylguanosine monophosphate (m7GMP). Cleaves cap analog structures like tri-methyl guanosine nucleoside triphosphate (m3(2,2,7)GpppG) with very poor efficiency. Does not hydrolyze unmethylated cap analog (GpppG) and shows no decapping activity on intact m7GpppG-capped mRNA molecules longer than 25 nucleotides. Does not hydrolyze 7-methylguanosine diphosphate (m7GDP) to m7GMP. May also play a role in the 5'-&gt;3 mRNA decay pathway; m7GDP, the downstream product released by the 5'-&gt;3' mRNA mediated decapping activity, may be also converted by DCPS to m7GMP. Binds to m7GpppG and strongly to m7GDP. Plays a role in first intron splicing of pre-mRNAs. Inhibits activation-induced cell death. In Sus scrofa (Pig), this protein is m7GpppX diphosphatase (DCPS).